The following is a 502-amino-acid chain: Protein nucleotidyltransferase YdiU (502 aa).

8 residues coordinate ATP: glycine 98, glycine 100, arginine 101, lysine 121, aspartate 133, glycine 134, arginine 184, and arginine 191. Aspartate 260 serves as the catalytic Proton acceptor. Residues asparagine 261 and aspartate 270 each contribute to the Mg(2+) site. Aspartate 270 provides a ligand contact to ATP.

Belongs to the SELO family. Mg(2+) is required as a cofactor. The cofactor is Mn(2+).

It carries out the reaction L-seryl-[protein] + ATP = 3-O-(5'-adenylyl)-L-seryl-[protein] + diphosphate. The catalysed reaction is L-threonyl-[protein] + ATP = 3-O-(5'-adenylyl)-L-threonyl-[protein] + diphosphate. It catalyses the reaction L-tyrosyl-[protein] + ATP = O-(5'-adenylyl)-L-tyrosyl-[protein] + diphosphate. The enzyme catalyses L-histidyl-[protein] + UTP = N(tele)-(5'-uridylyl)-L-histidyl-[protein] + diphosphate. It carries out the reaction L-seryl-[protein] + UTP = O-(5'-uridylyl)-L-seryl-[protein] + diphosphate. The catalysed reaction is L-tyrosyl-[protein] + UTP = O-(5'-uridylyl)-L-tyrosyl-[protein] + diphosphate. In terms of biological role, nucleotidyltransferase involved in the post-translational modification of proteins. It can catalyze the addition of adenosine monophosphate (AMP) or uridine monophosphate (UMP) to a protein, resulting in modifications known as AMPylation and UMPylation. This Rhizobium rhizogenes (strain K84 / ATCC BAA-868) (Agrobacterium radiobacter) protein is Protein nucleotidyltransferase YdiU.